The primary structure comprises 457 residues: UDP-N-acetylmuramate--L-alanine ligase (457 aa).

Residue 109-115 coordinates ATP; the sequence is GTDGKTT.

Belongs to the MurCDEF family.

The protein resides in the cytoplasm. The enzyme catalyses UDP-N-acetyl-alpha-D-muramate + L-alanine + ATP = UDP-N-acetyl-alpha-D-muramoyl-L-alanine + ADP + phosphate + H(+). The protein operates within cell wall biogenesis; peptidoglycan biosynthesis. Cell wall formation. The polypeptide is UDP-N-acetylmuramate--L-alanine ligase (murC) (Thermotoga maritima (strain ATCC 43589 / DSM 3109 / JCM 10099 / NBRC 100826 / MSB8)).